A 201-amino-acid chain; its full sequence is Potassium-transporting ATPase KdpC subunit (201 aa).

The chain crosses the membrane as a helical span at residues 7 to 29 (PALVLLTALTAITGLAYPLAMTG).

The protein belongs to the KdpC family. The system is composed of three essential subunits: KdpA, KdpB and KdpC.

It is found in the cell inner membrane. Part of the high-affinity ATP-driven potassium transport (or Kdp) system, which catalyzes the hydrolysis of ATP coupled with the electrogenic transport of potassium into the cytoplasm. This subunit acts as a catalytic chaperone that increases the ATP-binding affinity of the ATP-hydrolyzing subunit KdpB by the formation of a transient KdpB/KdpC/ATP ternary complex. The protein is Potassium-transporting ATPase KdpC subunit of Methylobacterium radiotolerans (strain ATCC 27329 / DSM 1819 / JCM 2831 / NBRC 15690 / NCIMB 10815 / 0-1).